We begin with the raw amino-acid sequence, 433 residues long: Mitochondrial distribution and morphology protein 12 (433 aa).

One can recognise an SMP-LTD domain in the interval Met1 to Ile433. Disordered stretches follow at residues Leu62 to Met113, Thr180 to Glu279, and Gly356 to Arg376. Positions Ser81–Asn96 are enriched in basic and acidic residues. Over residues Ser214–Val236 the composition is skewed to polar residues. Basic and acidic residues predominate over residues Pro268–Glu279.

Belongs to the MDM12 family. Component of the ER-mitochondria encounter structure (ERMES) or MDM complex, composed of MMM1, MDM10, MDM12 and MDM34. An MMM1 homodimer associates with one molecule of MDM12 on each side in a pairwise head-to-tail manner, and the SMP-LTD domains of MMM1 and MDM12 generate a continuous hydrophobic tunnel for phospholipid trafficking.

It is found in the mitochondrion outer membrane. It localises to the endoplasmic reticulum membrane. In terms of biological role, component of the ERMES/MDM complex, which serves as a molecular tether to connect the endoplasmic reticulum (ER) and mitochondria. Components of this complex are involved in the control of mitochondrial shape and protein biogenesis, and function in nonvesicular lipid trafficking between the ER and mitochondria. MDM12 is required for the interaction of the ER-resident membrane protein MMM1 and the outer mitochondrial membrane-resident beta-barrel protein MDM10. The MDM12-MMM1 subcomplex functions in the major beta-barrel assembly pathway that is responsible for biogenesis of all mitochondrial outer membrane beta-barrel proteins, and acts in a late step after the SAM complex. The MDM10-MDM12-MMM1 subcomplex further acts in the TOM40-specific pathway after the action of the MDM12-MMM1 complex. Essential for establishing and maintaining the structure of mitochondria and maintenance of mtDNA nucleoids. This Ajellomyces capsulatus (strain NAm1 / WU24) (Darling's disease fungus) protein is Mitochondrial distribution and morphology protein 12.